The following is a 258-amino-acid chain: Acetylglutamate kinase (258 aa).

Substrate contacts are provided by residues 44–45 (GG), arginine 66, and asparagine 158. ATP contacts are provided by residues 181-186 (DVSGIL) and 209-211 (IIT).

It belongs to the acetylglutamate kinase family. ArgB subfamily. As to quaternary structure, homodimer.

It is found in the cytoplasm. The catalysed reaction is N-acetyl-L-glutamate + ATP = N-acetyl-L-glutamyl 5-phosphate + ADP. Its pathway is amino-acid biosynthesis; L-arginine biosynthesis; N(2)-acetyl-L-ornithine from L-glutamate: step 2/4. Catalyzes the ATP-dependent phosphorylation of N-acetyl-L-glutamate. In Klebsiella pneumoniae subsp. pneumoniae (strain ATCC 700721 / MGH 78578), this protein is Acetylglutamate kinase.